A 268-amino-acid chain; its full sequence is Large ribosomal subunit protein uL4 (268 aa).

It belongs to the universal ribosomal protein uL4 family. In terms of assembly, part of the 50S ribosomal subunit.

In terms of biological role, one of the primary rRNA binding proteins, this protein initially binds near the 5'-end of the 23S rRNA. It is important during the early stages of 50S assembly. It makes multiple contacts with different domains of the 23S rRNA in the assembled 50S subunit and ribosome. Forms part of the polypeptide exit tunnel. The sequence is that of Large ribosomal subunit protein uL4 from Nanoarchaeum equitans (strain Kin4-M).